The sequence spans 166 residues: NAD(P)H-quinone oxidoreductase subunit I, chloroplastic (166 aa).

2 4Fe-4S ferredoxin-type domains span residues 55-84 (GRIH…VDWK) and 95-124 (LNYS…MTEE). Cys64, Cys67, Cys70, Cys74, Cys104, Cys107, Cys110, and Cys114 together coordinate [4Fe-4S] cluster.

The protein belongs to the complex I 23 kDa subunit family. NDH is composed of at least 16 different subunits, 5 of which are encoded in the nucleus. It depends on [4Fe-4S] cluster as a cofactor.

The protein localises to the plastid. It is found in the chloroplast thylakoid membrane. It carries out the reaction a plastoquinone + NADH + (n+1) H(+)(in) = a plastoquinol + NAD(+) + n H(+)(out). It catalyses the reaction a plastoquinone + NADPH + (n+1) H(+)(in) = a plastoquinol + NADP(+) + n H(+)(out). Its function is as follows. NDH shuttles electrons from NAD(P)H:plastoquinone, via FMN and iron-sulfur (Fe-S) centers, to quinones in the photosynthetic chain and possibly in a chloroplast respiratory chain. The immediate electron acceptor for the enzyme in this species is believed to be plastoquinone. Couples the redox reaction to proton translocation, and thus conserves the redox energy in a proton gradient. In Calea megacephala, this protein is NAD(P)H-quinone oxidoreductase subunit I, chloroplastic.